A 215-amino-acid chain; its full sequence is Small ribosomal subunit protein uS3 (215 aa).

The KH type-2 domain occupies 39–109 (IRKFIKKRLE…EVLVDVKEVK (71 aa)).

This sequence belongs to the universal ribosomal protein uS3 family. Part of the 30S ribosomal subunit. Forms a tight complex with proteins S10 and S14.

Functionally, binds the lower part of the 30S subunit head. Binds mRNA in the 70S ribosome, positioning it for translation. The chain is Small ribosomal subunit protein uS3 from Methylacidiphilum infernorum (isolate V4) (Methylokorus infernorum (strain V4)).